The primary structure comprises 827 residues: Transcription factor SOX-6 (827 aa).

Over residues 1–10 (MSSKQATSPF) the composition is skewed to polar residues. The tract at residues 1–51 (MSSKQATSPFACTVDGEETMTQDLTSREKEEGSDQHPASHLPLHPIMHNKP) is disordered. The segment covering 25 to 34 (TSREKEEGSD) has biased composition (basic and acidic residues). Thr-119 is modified (phosphothreonine). Residues 184-257 (LAEKERQLST…QHKINLLQQQ (74 aa)) adopt a coiled-coil conformation. Disordered stretches follow at residues 329–360 (HVSHPQINPRLKGISDRLGRNLDPYEHGGGHS) and 380–470 (SPGA…PIGG). The span at 341–357 (GISDRLGRNLDPYEHGG) shows a compositional bias: basic and acidic residues. A Phosphoserine modification is found at Ser-399. The residue at position 401 (Thr-401) is a Phosphothreonine. Glycyl lysine isopeptide (Lys-Gly) (interchain with G-Cter in SUMO) cross-links involve residues Lys-404 and Lys-417. 2 stretches are compositionally biased toward polar residues: residues 421-431 (TAQPLNLSSRP) and 439-461 (SPTSPTQSLFPASKTSPVNLPNK). A phosphoserine mark is found at Ser-439 and Ser-442. Residues 620–688 (IKRPMNAFMV…IHLEKYPNYK (69 aa)) constitute a DNA-binding region (HMG box). 2 disordered regions span residues 752 to 772 (TPSPQMTSDCSSTSASPEPSL) and 786 to 827 (ASLA…VSAN). The span at 795-808 (NGEDEMEAYDDYED) shows a compositional bias: acidic residues.

As to quaternary structure, homodimer. Interacts with DAZAP2. May interact with CENPK. Post-translationally, sumoylation inhibits the transcriptional activity.

It localises to the nucleus. The protein localises to the cytoplasm. Functionally, transcription factor that plays a key role in several developmental processes, including neurogenesis, chondrocytes differentiation and cartilage formation. Specifically binds the 5'-AACAAT-3' DNA motif present in enhancers and super-enhancers and promotes expression of genes important for chondrogenesis. Required for overt chondrogenesis when condensed prechondrocytes differentiate into early stage chondrocytes: SOX5 and SOX6 cooperatively bind with SOX9 on active enhancers and super-enhancers associated with cartilage-specific genes, and thereby potentiate SOX9's ability to transactivate. Not involved in precartilaginous condensation, the first step in chondrogenesis, during which skeletal progenitors differentiate into prechondrocytes. Together with SOX5, required to form and maintain a pool of highly proliferating chondroblasts between epiphyses and metaphyses, to form columnar chondroblasts, delay chondrocyte prehypertrophy but promote hypertrophy, and to delay terminal differentiation of chondrocytes on contact with ossification fronts. Binds to the proximal promoter region of the myelin protein MPZ gene, and is thereby involved in the differentiation of oligodendroglia in the developing spinal tube. Binds to the gene promoter of MBP and acts as a transcriptional repressor. The chain is Transcription factor SOX-6 from Rattus norvegicus (Rat).